The following is a 318-amino-acid chain: Ribonuclease Z (318 aa).

7 residues coordinate Zn(2+): histidine 62, histidine 64, aspartate 66, histidine 67, histidine 144, aspartate 215, and histidine 273. The Proton acceptor role is filled by aspartate 66.

It belongs to the RNase Z family. Homodimer. The cofactor is Zn(2+).

The catalysed reaction is Endonucleolytic cleavage of RNA, removing extra 3' nucleotides from tRNA precursor, generating 3' termini of tRNAs. A 3'-hydroxy group is left at the tRNA terminus and a 5'-phosphoryl group is left at the trailer molecule.. In terms of biological role, zinc phosphodiesterase, which displays some tRNA 3'-processing endonuclease activity. Probably involved in tRNA maturation, by removing a 3'-trailer from precursor tRNA. This Prochlorococcus marinus (strain MIT 9303) protein is Ribonuclease Z.